A 455-amino-acid polypeptide reads, in one-letter code: Asparagine--tRNA ligase (455 aa).

The protein belongs to the class-II aminoacyl-tRNA synthetase family. Homodimer.

The protein resides in the cytoplasm. The enzyme catalyses tRNA(Asn) + L-asparagine + ATP = L-asparaginyl-tRNA(Asn) + AMP + diphosphate + H(+). The sequence is that of Asparagine--tRNA ligase from Lawsonia intracellularis (strain PHE/MN1-00).